The following is a 405-amino-acid chain: NADH-quinone oxidoreductase subunit D (405 aa).

This sequence belongs to the complex I 49 kDa subunit family. As to quaternary structure, NDH-1 is composed of 14 different subunits. Subunits NuoB, C, D, E, F, and G constitute the peripheral sector of the complex.

The protein localises to the cell inner membrane. The enzyme catalyses a quinone + NADH + 5 H(+)(in) = a quinol + NAD(+) + 4 H(+)(out). Functionally, NDH-1 shuttles electrons from NADH, via FMN and iron-sulfur (Fe-S) centers, to quinones in the respiratory chain. The immediate electron acceptor for the enzyme in this species is believed to be ubiquinone. Couples the redox reaction to proton translocation (for every two electrons transferred, four hydrogen ions are translocated across the cytoplasmic membrane), and thus conserves the redox energy in a proton gradient. The protein is NADH-quinone oxidoreductase subunit D of Sphingopyxis alaskensis (strain DSM 13593 / LMG 18877 / RB2256) (Sphingomonas alaskensis).